The following is a 259-amino-acid chain: uncharacterized protein (259 aa).

A signal peptide spans Met1–Gly22. Residue Cys23 is the site of N-palmitoyl cysteine attachment. Residue Cys23 is the site of S-diacylglycerol cysteine attachment.

Belongs to the staphylococcal tandem lipoprotein family.

Its subcellular location is the cell membrane. This is an uncharacterized protein from Staphylococcus epidermidis (strain ATCC 35984 / DSM 28319 / BCRC 17069 / CCUG 31568 / BM 3577 / RP62A).